A 510-amino-acid polypeptide reads, in one-letter code: NAD(P)H-quinone oxidoreductase subunit 2 B, chloroplastic (510 aa).

13 consecutive transmembrane segments (helical) span residues 24–44 (LLLF…GLIL), 57–77 (IPWL…ALLF), 99–119 (IFQF…VEYI), 124–144 (MAIT…MFLC), 150–170 (ITIF…SGYT), 183–203 (YLLM…WLYG), 229–249 (ISIA…PAPF), 295–315 (WHLL…LVAI), 323–343 (MLAY…IVGD), 347–367 (GYAS…GTFA), 395–415 (ALSS…AGFF), 418–438 (LHLF…IGLL), and 484–504 (MIVC…IIAI).

This sequence belongs to the complex I subunit 2 family. In terms of assembly, NDH is composed of at least 16 different subunits, 5 of which are encoded in the nucleus.

The protein localises to the plastid. Its subcellular location is the chloroplast thylakoid membrane. The enzyme catalyses a plastoquinone + NADH + (n+1) H(+)(in) = a plastoquinol + NAD(+) + n H(+)(out). The catalysed reaction is a plastoquinone + NADPH + (n+1) H(+)(in) = a plastoquinol + NADP(+) + n H(+)(out). NDH shuttles electrons from NAD(P)H:plastoquinone, via FMN and iron-sulfur (Fe-S) centers, to quinones in the photosynthetic chain and possibly in a chloroplast respiratory chain. The immediate electron acceptor for the enzyme in this species is believed to be plastoquinone. Couples the redox reaction to proton translocation, and thus conserves the redox energy in a proton gradient. This chain is NAD(P)H-quinone oxidoreductase subunit 2 B, chloroplastic, found in Ceratophyllum demersum (Rigid hornwort).